The primary structure comprises 240 residues: MSDIKYKRVLLKLSGEALAGDQGKGINPPEILKVAEEIKEVHDLGVQIAIVVGGGNMWRGEAGAEIGMERAQADYIGMLGTVMNALALQDSLESVGVPTRVQTAIEMRQVAEPYIRRKAIRHLEKGRIVIFAAGTGSPYFSTDTTAALRASELNAEVILMAKNGVDGIYNADPKVDPTAKKYTKLTHMDIINKGLRVMDTTASSLSMDNNIALVVFNMNNRGNIKKVVEGEEIGTTVEGK.

12–15 (KLSG) is a binding site for ATP. Residues 20–25 (GDQGKG) form an involved in allosteric activation by GTP region. A UMP-binding site is contributed by G54. Residues G55 and R59 each coordinate ATP. Residues D74 and 135 to 142 (TGSPYFST) each bind UMP. Residues N163, Y169, and D172 each contribute to the ATP site.

Belongs to the UMP kinase family. As to quaternary structure, homohexamer.

It is found in the cytoplasm. It catalyses the reaction UMP + ATP = UDP + ADP. It functions in the pathway pyrimidine metabolism; CTP biosynthesis via de novo pathway; UDP from UMP (UMPK route): step 1/1. Allosterically activated by GTP. Inhibited by UTP. Its function is as follows. Catalyzes the reversible phosphorylation of UMP to UDP. In Ligilactobacillus salivarius (strain UCC118) (Lactobacillus salivarius), this protein is Uridylate kinase.